Consider the following 78-residue polypeptide: Acyl carrier protein (78 aa).

A Carrier domain is found at 1-76; it reads MAIHPKVKDI…DVASYLEKKG (76 aa). The residue at position 36 (Ser-36) is an O-(pantetheine 4'-phosphoryl)serine.

This sequence belongs to the acyl carrier protein (ACP) family. 4'-phosphopantetheine is transferred from CoA to a specific serine of apo-ACP by AcpS. This modification is essential for activity because fatty acids are bound in thioester linkage to the sulfhydryl of the prosthetic group.

It localises to the cytoplasm. Its pathway is lipid metabolism; fatty acid biosynthesis. In terms of biological role, carrier of the growing fatty acid chain in fatty acid biosynthesis. The protein is Acyl carrier protein of Bdellovibrio bacteriovorus (strain ATCC 15356 / DSM 50701 / NCIMB 9529 / HD100).